The following is a 440-amino-acid chain: VGFKAGVKDYRLTYYTPGYKTKDTDILAAFRMTPQPGVPAEEAGAAVAAESSTGTWTTVWTDGXTSLDRYKGRCYDIEPVAGEENQYIAYVAYPLDLFEEGSVTNLFTSIVGNVFGFKALRALRLEDLRIPPAYSKTFIGPPHGIQVERDKLNKYGRPLLGCTIKPKLGLSAKNYGRAVYEYLRGGLDFTKDDENVNSQPFMRWRDRFLFVAEALFKSQAETGEIKGHYLNATAGTCEEMLKRAVFARELGAPIVMHDYLTGGFTANTSLAYYCRDNGLLLHIHRAMHAVIDRQRNHGIHFRVLAKALRMSGGDHIHAGTVVGKLEGEREVTLGFVDLLRDDYIEKDRSRGIYFTQDWVSMPGVHPVASGGIHVWHMPALTEIFGDDSVLQFGGGTLGHPWGNAPGAVANRVALEACVQARNEGRDLAREGNEVXREACK.

Lys-4 is modified (N6,N6,N6-trimethyllysine). Substrate contacts are provided by Asn-113 and Thr-163. The Proton acceptor role is filled by Lys-165. Lys-167 contacts substrate. Mg(2+) is bound by residues Lys-191, Asp-193, and Glu-194. Lys-191 is modified (N6-carboxylysine). The active-site Proton acceptor is His-284. Substrate-binding residues include Arg-285, His-317, and Ser-369.

It belongs to the RuBisCO large chain family. Type I subfamily. Heterohexadecamer of 8 large chains and 8 small chains; disulfide-linked. The disulfide link is formed within the large subunit homodimers. Mg(2+) serves as cofactor. In terms of processing, the disulfide bond which can form in the large chain dimeric partners within the hexadecamer appears to be associated with oxidative stress and protein turnover.

The protein resides in the plastid. It localises to the chloroplast. The enzyme catalyses 2 (2R)-3-phosphoglycerate + 2 H(+) = D-ribulose 1,5-bisphosphate + CO2 + H2O. It carries out the reaction D-ribulose 1,5-bisphosphate + O2 = 2-phosphoglycolate + (2R)-3-phosphoglycerate + 2 H(+). Functionally, ruBisCO catalyzes two reactions: the carboxylation of D-ribulose 1,5-bisphosphate, the primary event in carbon dioxide fixation, as well as the oxidative fragmentation of the pentose substrate in the photorespiration process. Both reactions occur simultaneously and in competition at the same active site. In Polystichum munitum (Western sword-fern), this protein is Ribulose bisphosphate carboxylase large chain.